We begin with the raw amino-acid sequence, 603 residues long: Protein regulator of cytokinesis 1 (603 aa).

A dimerization region spans residues 1–341 (MRRSEVLADE…HLHDAEIVRL (341 aa)). 5 coiled-coil regions span residues 34 to 65 (EQRL…RERL), 96 to 136 (ILQL…DILC), 211 to 246 (SLEN…IREL), 272 to 304 (RNAL…LAQF), and 383 to 463 (GNLL…AEML). The interval 342–466 (RNYYDVHKEL…QTEAEMLYGS (125 aa)) is spectrin-fold. The segment covering 447-459 (KQERQLKNKKQTE) has biased composition (basic and acidic residues). Positions 447–502 (KQERQLKNKKQTEAEMLYGSTPRTPSKRPGQTPKKSGKMNTTTMSSATPNSSIRPV) are disordered. The segment at 467-603 (TPRTPSKRPG…RILNSTNIQS (137 aa)) is unstructured, Arg/Lys rich. The residue at position 470 (threonine 470) is a Phosphothreonine; by CDK1. Polar residues predominate over residues 484–499 (KMNTTTMSSATPNSSI). A phosphoserine mark is found at serine 510 and serine 568. Phosphothreonine is present on threonine 575. Residues 583–603 (LSKASRSDATSRILNSTNIQS) are disordered. The segment covering 589–603 (SDATSRILNSTNIQS) has biased composition (polar residues). Threonine 599 bears the Phosphothreonine; by PLK1 mark.

It belongs to the MAP65/ASE1 family. Homodimer. Interacts with the C-terminal Rho-GAP domain and the basic region of RACGAP1. The interaction with RACGAP1 inhibits its GAP activity towards CDC42 in vitro, which may be required for maintaining normal spindle morphology. Interacts (via N-terminus) with the C-terminus of CENPE (via C-terminus); the interaction occurs during late mitosis. Interacts (via N-terminus) with KIF4A (via C-terminus); the interaction is required for the progression of mitosis. Interacts (via N-terminus) with KIF23 (via C-terminus); the interaction occurs during late mitosis. Interacts with KIF14 and KIF20A. Interacts with PLK1. Interacts with KIF20B. Interacts with CCDC66. In terms of processing, phosphorylation by CDK1 in early mitosis holds PRC1 in an inactive monomeric state, during the metaphase to anaphase transition, PRC1 is dephosphorylated, promoting interaction with KIF4A, which then translocates PRC1 along mitotic spindles to the plus ends of antiparallel interdigitating microtubules. Dephosphorylation also promotes MT-bundling activity by allowing dimerization. Phosphorylation by CDK1 prevents PLK1-binding: upon degradation of CDK1 at anaphase and dephosphorylation, it is then phosphorylated by PLK1, leading to cytokinesis.

The protein resides in the nucleus. It localises to the cytoplasm. Its subcellular location is the cytoskeleton. The protein localises to the spindle pole. It is found in the midbody. Functionally, key regulator of cytokinesis that cross-links antiparrallel microtubules at an average distance of 35 nM. Essential for controlling the spatiotemporal formation of the midzone and successful cytokinesis. Required for KIF14 localization to the central spindle and midbody. Required to recruit PLK1 to the spindle. Stimulates PLK1 phosphorylation of RACGAP1 to allow recruitment of ECT2 to the central spindle. Acts as an oncogene for promoting bladder cancer cells proliferation, apoptosis inhibition and carcinogenic progression. This chain is Protein regulator of cytokinesis 1, found in Mus musculus (Mouse).